A 94-amino-acid chain; its full sequence is Defensin-7 (94 aa).

The signal sequence occupies residues 1 to 19; it reads MRTLTLLSAFLLVALQAWA. 2 disulfides stabilise this stretch: Cys-65-Cys-93 and Cys-72-Cys-92.

Belongs to the alpha-defensin family.

It localises to the secreted. Its function is as follows. Has antimicrobial activity. The sequence is that of Defensin-7 (DEFA7) from Pan troglodytes (Chimpanzee).